A 168-amino-acid polypeptide reads, in one-letter code: Protein-export protein SecB (168 aa).

Belongs to the SecB family. In terms of assembly, homotetramer, a dimer of dimers. One homotetramer interacts with 1 SecA dimer.

It localises to the cytoplasm. Its function is as follows. One of the proteins required for the normal export of preproteins out of the cell cytoplasm. It is a molecular chaperone that binds to a subset of precursor proteins, maintaining them in a translocation-competent state. It also specifically binds to its receptor SecA. The sequence is that of Protein-export protein SecB from Haemophilus influenzae (strain PittGG).